The following is an 865-amino-acid chain: MPNIIRKLVENDKKELKKLNRMALQVESFADEMEHLTDEQLKAKTPELKERIAKGESLDDLLYEAFAVCREAARRVLGLYPFHVQIMGGIVLHNGDVPEMRTGEGKTLTATMPVYLNALSGKGVHVVTVNEYLATRDMTEMGELYSWLGLTVGLNLNSKSPEEKREAYNCDITYSTSAELGFDYLRDNMVTRAEDMVQKPLNYALVDEVDSILVDEARTPLIISGQAESSSALYYRADQFTKTLKGQNLNVATSEYEEGDDYKIDLQSKTISLTEEGIDKAEKFFQIENLYDMENVALTHFVDNALRANFIMLHDIDYMVDENQEVLIIDQFTGRTMPGRRYSDGLHQAIEAKEAVPIQDESKTMASITIQNYFRMYKKLSGMTGTAKTEEEEFREIYNIQITPIPTNRPVQRLDHPDLLYPTLEAKFKAVIDDIKRRHAEGQPILIGTVAVETSELISKKLVEAKIPHEVLNAKNHFREAQIIMNAGQQGAVTIATNMAGRGTDIKLGPGVIDHVDPEFRGLAVIGTERHESRRIDNQLRGRSGRQGDPGVSQFYLSLEDELMKRFGSERVSAFLDRMRISGEDAVIKSGLITRQIESSQKRVEGNNYDSRKQVLQYDDVIREQREVIYAQRQEVILATEDMTPVLMGMFKRTIDRQVDGHELAGSLKDEENVKNLLQTLHNTMLPEDGIELSELTGLSVQAMKDLIFDKVKARYASQMEKLSDPERQLEFQRAVILRVVDNNWSEHIDALDQMRQSVGLRGYAQNNPIVEYQEESYKMYNNMIGAIEFEVTRLMMKAQIQPQTAIRQEAPRMTTTASQENITNVDTEHSVSEEISFENVGRNDLCPCGSGKKFKNCHGRTHIA.

Residues Gln-85, 103 to 107 (GEGKT), and Asp-505 contribute to the ATP site. Zn(2+)-binding residues include Cys-847, Cys-849, Cys-858, and His-859.

The protein belongs to the SecA family. In terms of assembly, monomer and homodimer. Part of the essential Sec protein translocation apparatus which comprises SecA, SecYEG and auxiliary proteins SecDF. Other proteins may also be involved. Zn(2+) is required as a cofactor.

It is found in the cell membrane. The protein localises to the cytoplasm. The enzyme catalyses ATP + H2O + cellular proteinSide 1 = ADP + phosphate + cellular proteinSide 2.. Its function is as follows. Part of the Sec protein translocase complex. Interacts with the SecYEG preprotein conducting channel. Has a central role in coupling the hydrolysis of ATP to the transfer of proteins into and across the cell membrane, serving as an ATP-driven molecular motor driving the stepwise translocation of polypeptide chains across the membrane. In Lactococcus lactis subsp. lactis (strain IL1403) (Streptococcus lactis), this protein is Protein translocase subunit SecA.